We begin with the raw amino-acid sequence, 332 residues long: DNA-directed RNA polymerase subunit alpha (332 aa).

Positions 1-232 (MKGYLKDFLK…DQLSVFVDLE (232 aa)) are alpha N-terminal domain (alpha-NTD). The segment at 247 to 332 (IDPVLLRPID…SLGDRARIAG (86 aa)) is alpha C-terminal domain (alpha-CTD).

It belongs to the RNA polymerase alpha chain family. In terms of assembly, homodimer. The RNAP catalytic core consists of 2 alpha, 1 beta, 1 beta' and 1 omega subunit. When a sigma factor is associated with the core the holoenzyme is formed, which can initiate transcription.

The catalysed reaction is RNA(n) + a ribonucleoside 5'-triphosphate = RNA(n+1) + diphosphate. Functionally, DNA-dependent RNA polymerase catalyzes the transcription of DNA into RNA using the four ribonucleoside triphosphates as substrates. The polypeptide is DNA-directed RNA polymerase subunit alpha (Halorhodospira halophila (strain DSM 244 / SL1) (Ectothiorhodospira halophila (strain DSM 244 / SL1))).